A 196-amino-acid polypeptide reads, in one-letter code: MAERWRNTALLVIDMQNDFIEEGAVTQVKGGKSIVPNVIRVVELARQRGILVIWVVREHDRQGRDVELFRRHNYSSEKVGPVIKGTVGAELVDGLMINEEDDYKIVKTRFSAFFSTNLHSFLQTSGVTKLVIAGVQTPNCIRQTVFDAVALDYPNVTVITDATAAATPEIHTANILDMKNIGVKTPTLHEWSEELA.

Belongs to the isochorismatase family.

Its function is as follows. Does not possess nicotinamidase activity in vitro. This Arabidopsis thaliana (Mouse-ear cress) protein is Probable inactive nicotinamidase At3g16190.